The sequence spans 556 residues: Glutamine--tRNA ligase (556 aa).

Residues 35–45 (PEPNGYLHIGH) carry the 'HIGH' region motif. Residues 36 to 38 (EPN) and 42 to 48 (HIGHAKS) contribute to the ATP site. L-glutamine-binding residues include aspartate 68 and tyrosine 213. ATP contacts are provided by residues threonine 232 and 262–263 (RL). A 'KMSKS' region motif is present at residues 269–273 (VTSKR).

It belongs to the class-I aminoacyl-tRNA synthetase family. Monomer.

The protein localises to the cytoplasm. It catalyses the reaction tRNA(Gln) + L-glutamine + ATP = L-glutaminyl-tRNA(Gln) + AMP + diphosphate. The protein is Glutamine--tRNA ligase of Pseudomonas aeruginosa (strain LESB58).